Here is a 135-residue protein sequence, read N- to C-terminus: Small ribosomal subunit protein uS11 (135 aa).

It belongs to the universal ribosomal protein uS11 family. As to quaternary structure, part of the 30S ribosomal subunit. Interacts with proteins S7 and S18. Binds to IF-3.

In terms of biological role, located on the platform of the 30S subunit, it bridges several disparate RNA helices of the 16S rRNA. Forms part of the Shine-Dalgarno cleft in the 70S ribosome. This chain is Small ribosomal subunit protein uS11, found in Solibacter usitatus (strain Ellin6076).